The following is an 882-amino-acid chain: Bifunctional heparan sulfate N-deacetylase/N-sulfotransferase 1 (882 aa).

Residues Met-1–Gln-17 lie on the Cytoplasmic side of the membrane. A sufficient for localization to Golgi membrane region spans residues Met-1–Phe-169. Residues Ala-18–Tyr-39 traverse the membrane as a helical; Signal-anchor for type II membrane protein segment. The interval Gly-40–Glu-598 is heparan sulfate N-deacetylase 1. The Lumenal portion of the chain corresponds to Gly-40–Arg-882. N-linked (GlcNAc...) asparagine glycosylation is found at Asn-231, Asn-351, and Asn-401. A heparan sulfate N-sulfotransferase 1 region spans residues Lys-599 to Arg-882. The active-site For sulfotransferase activity is Lys-614. Lys-614–Thr-618 is an adenosine 3',5'-bisphosphate binding site. An N-linked (GlcNAc...) asparagine glycan is attached at Asn-667. Adenosine 3',5'-bisphosphate-binding residues include Ser-712 and Trp-817. An intrachain disulfide couples Cys-818 to Cys-828. Lys-833–Tyr-837 contributes to the adenosine 3',5'-bisphosphate binding site.

This sequence belongs to the sulfotransferase 1 family. NDST subfamily. In terms of assembly, monomer. As to quaternary structure, interacts with heparan sulfate co-polymerase subunits EXT1 and EXT2. Interacts with NDST1 isoform 3. Interacts with heparan sulfate co-polymerase subunits EXT1 and EXT2. Interacts with NDST1 isoform 1. As to expression, widely expressed. Expression is most abundant in heart, liver and pancreas.

The protein resides in the golgi apparatus. It is found in the trans-Golgi network membrane. The protein localises to the cis-Golgi network membrane. It carries out the reaction N-acetyl-alpha-D-glucosaminyl-[heparan sulfate](n) + H2O = alpha-D-glucosaminyl-[heparan sulfate](n) + acetate. The catalysed reaction is alpha-D-glucosaminyl-[heparan sulfate](n) + 3'-phosphoadenylyl sulfate = N-sulfo-alpha-D-glucosaminyl-[heparan sulfate](n) + adenosine 3',5'-bisphosphate + 2 H(+). Its pathway is glycan metabolism; heparan sulfate biosynthesis. It functions in the pathway glycan metabolism; heparin biosynthesis. Functionally, essential bifunctional enzyme that catalyzes both the N-deacetylation and the N-sulfation of glucosamine (GlcNAc) of the glycosaminoglycan in heparan sulfate. Modifies the GlcNAc-GlcA disaccharide repeating sugar backbone to make N-sulfated heparosan, a prerequisite substrate for later modifications in heparin biosynthesis. Plays a role in determining the extent and pattern of sulfation of heparan sulfate. Participates in biosynthesis of heparan sulfate that can ultimately serve as L-selectin ligands, thereby playing a role in inflammatory response. Required for the exosomal release of SDCBP, CD63 and syndecan. Its function is as follows. Lacks both N-deacetylase and N-sulfotransferase activities. Acts as a dominant negative on isoform 1, likely by changing the composition of enzyme complexes responsible for elongation and modification of heparan sulfates. This chain is Bifunctional heparan sulfate N-deacetylase/N-sulfotransferase 1, found in Homo sapiens (Human).